A 279-amino-acid polypeptide reads, in one-letter code: B3 domain-containing protein Os05g0481400 (279 aa).

Positions 45-68 are disordered; it reads ARLQKSTRASPKPRKKFEVGATEV. The TF-B3 DNA-binding region spans 139–230; it reads FVKTMVRSHV…RFKIYIIKAV (92 aa). 2 stretches are compositionally biased toward acidic residues: residues 233-244 and 252-262; these read DANESEPADEEA and TEDAAEQDDSP. The disordered stretch occupies residues 233–279; it reads DANESEPADEEAIGDKDTSTEDAAEQDDSPNAEPLKGTKRRKLRGRR. Over residues 269-279 the composition is skewed to basic residues; sequence GTKRRKLRGRR.

The protein resides in the nucleus. The sequence is that of B3 domain-containing protein Os05g0481400 from Oryza sativa subsp. japonica (Rice).